Consider the following 84-residue polypeptide: Small ribosomal subunit protein bS16 (84 aa).

Belongs to the bacterial ribosomal protein bS16 family.

This is Small ribosomal subunit protein bS16 from Cupriavidus pinatubonensis (strain JMP 134 / LMG 1197) (Cupriavidus necator (strain JMP 134)).